The primary structure comprises 868 residues: LPS-assembly protein LptD (868 aa).

The first 24 residues, 1–24 (MLKGIHKYLLMCFGTVLFTVQANA), serve as a signal peptide directing secretion.

It belongs to the LptD family. Component of the lipopolysaccharide transport and assembly complex. Interacts with LptE and LptA.

The protein localises to the cell outer membrane. Together with LptE, is involved in the assembly of lipopolysaccharide (LPS) at the surface of the outer membrane. The polypeptide is LPS-assembly protein LptD (Francisella tularensis subsp. tularensis (strain FSC 198)).